A 297-amino-acid chain; its full sequence is Virulence genes transcriptional activator SpvR (297 aa).

The HTH lysR-type domain occupies 1-61 (MDFLINKKLK…IRKNGTLIPT (61 aa)). The segment at residues 21–40 (FSIATSVLYITRTPLSRVIS) is a DNA-binding region (H-T-H motif).

Belongs to the LysR transcriptional regulatory family.

It is found in the cytoplasm. Positive regulator for the plasmid-encoded virulence factors SpvA, SpvB, and SpvC. The protein is Virulence genes transcriptional activator SpvR (spvR) of Salmonella dublin.